Reading from the N-terminus, the 278-residue chain is Large ribosomal subunit protein uL2 (278 aa).

Positions K211 to K278 are disordered. Residues K258 to I270 are compositionally biased toward basic and acidic residues.

This sequence belongs to the universal ribosomal protein uL2 family. In terms of assembly, part of the 50S ribosomal subunit. Forms a bridge to the 30S subunit in the 70S ribosome.

In terms of biological role, one of the primary rRNA binding proteins. Required for association of the 30S and 50S subunits to form the 70S ribosome, for tRNA binding and peptide bond formation. It has been suggested to have peptidyltransferase activity; this is somewhat controversial. Makes several contacts with the 16S rRNA in the 70S ribosome. This Lactobacillus helveticus (strain DPC 4571) protein is Large ribosomal subunit protein uL2.